Reading from the N-terminus, the 267-residue chain is 2-keto-3-deoxy-L-rhamnonate aldolase (267 aa).

His49 (proton acceptor) is an active-site residue. Gln151 provides a ligand contact to substrate. Glu153 contributes to the Mg(2+) binding site. Positions 178 and 179 each coordinate substrate. Mg(2+) is bound at residue Asp179.

It belongs to the HpcH/HpaI aldolase family. KDR aldolase subfamily. Homohexamer. Requires Mg(2+) as cofactor.

It carries out the reaction 2-dehydro-3-deoxy-L-rhamnonate = (S)-lactaldehyde + pyruvate. Catalyzes the reversible retro-aldol cleavage of 2-keto-3-deoxy-L-rhamnonate (KDR) to pyruvate and lactaldehyde. The chain is 2-keto-3-deoxy-L-rhamnonate aldolase from Salmonella paratyphi A (strain ATCC 9150 / SARB42).